The primary structure comprises 515 residues: Cytochrome P450 monooxygenase paxP (515 aa).

The chain crosses the membrane as a helical span at residues 20-36 (SLLWKLGVFAVLVYFLL). Residue cysteine 456 coordinates heme.

Belongs to the cytochrome P450 family. Heme serves as cofactor.

The protein localises to the membrane. It functions in the pathway secondary metabolite biosynthesis. Cytochrome P450 monooxygenase; part of the ATM2 gene cluster that mediates the biosynthesis of paxilline, a mycotoxin that acts as an inhibitor of mammalian maxi-K channels. PaxG, the geranylgeranyl diphosphate (GGPP) synthase is proposed to catalyze the first step in paxilline biosynthesis. Condensation of indole-3-glycerol phosphate with GGPP by paxC then forms 3-geranylgeranylindole (3-GGI), followed by epoxidation and cyclization of this intermediate (by paxM and paxB) to form paspaline. Paspaline is subsequently converted to 13-desoxypaxilline by paxP, the latter being then converted to paxilline by paxQ. Finally paxilline can be mono- and di-prenylated by paxD. PaxP can also utilized beta-paxitriol and alpha-PC-M6 as substrates converting them to paxilline. The chain is Cytochrome P450 monooxygenase paxP from Penicillium paxilli.